A 397-amino-acid polypeptide reads, in one-letter code: MTNNGNEPNLTLSDLYDKDVVYTSRPSYISNPWLKPDEHQSNFLTGRELLIANQLPVIVHEASATDKLHQLFQVIGKEVPNSIYTFNNQQSYENLIKQLAHKENKKIYFQYIHDETILNQQYYALDKTLFVALNNKARIPEWTNGKFLPKRKVVKIEQFENEIKNWEFPLVIKPGDDLPTAGGYGVMICYHDADLQKAITRIKEATAETNSLIIEQKIEEKANYCVQFAYSESLGIQYLGAATQLTDKYGFYNGNENTTNVPEHVIEAGRQIMENGVNQGFFGVAGFDLLVDEDDNVYAIDLNFRQNGSTSMLLLANELNSGYQKFYSYHSKGDNTHFFNTILKYVKEGSLYPLSYYDGDWYGEDKVKSRFGCIWHGDSKETVLENERAFLAELEHY.

Residues 131–347 enclose the ATP-grasp domain; it reads VALNNKARIP…FFNTILKYVK (217 aa). ADP contacts are provided by Lys-136, Val-171, Lys-173, Gly-183, Val-186, Ile-188, Glu-215, Gln-216, Ile-218, Asn-223, and Thr-246. Asp-288 provides a ligand contact to Mg(2+). Positions 290 and 300 each coordinate ADP. Position 301 (Asp-301) interacts with Mg(2+). The active-site Critical for catalysis is Arg-305.

In terms of assembly, primarily a monomer in solution. Minor homodimer formation. It depends on Mg(2+) as a cofactor.

It catalyses the reaction L-aspartate + L-methionine + ATP = L-aspartyl-L-methionine + ADP + phosphate + H(+). Its pathway is amino-acid metabolism. In terms of biological role, L-amino acid ligase, which preferentially catalyzes the formation of L-aspartyl-L-methionine dipeptide from L-aspartate and L-methionine in the presence of ATP. Less active with L-asparagine and L-methionine as substrates. Less active with L-aspartate and either L-phenylalanine, L-valine, L-leucine or L-isoleucine as substrates. Decreased activity when L-methionine is substituted with seleno-DL-methionine, L-homocysteine, L-methionine sulfoxide, L-methionine sulfoximine and o-acetyl-L-serine. Decreased activity with acetylation of L-methionine amino group. Decreased activity by modification of L-methionine carboxylate to L-methionine methyl ester. No activity when L-methionine is substituted with L-homoserine. No activity with formylation of L-methionine amino group. No activity by modification of L-methionine carboxylate to L-methionine-glycine carboxylate. No activity when L-aspartate substrate is replaced by analogs such as L-homoserine, DL-aspartate beta-methyl ester, L-glutamate or o-acetyl-L-serine. No activity when L-aspartate amino and alpha-carboxylate groups are modified to L-malate, glycine-L-aspartate, L-aspartate-glycine or N-carbamoyl-DL-aspartate. No activity with L-methionine or L-aspartate as sole substrates. No activity in presence of other nucleoside triphosphates including GTP, CTP, UTP, TTP or ITP. Involved in sulfur amino acid metabolism. The sequence is that of L-aspartate--L-methionine ligase from Staphylococcus aureus (strain NCTC 8325 / PS 47).